The following is a 600-amino-acid chain: Elongation factor 4 (600 aa).

One can recognise a tr-type G domain in the interval Lys5–Lys187. GTP-binding positions include Asp17–Thr22 and Asn134–Asp137.

This sequence belongs to the TRAFAC class translation factor GTPase superfamily. Classic translation factor GTPase family. LepA subfamily.

The protein resides in the cell inner membrane. It catalyses the reaction GTP + H2O = GDP + phosphate + H(+). Its function is as follows. Required for accurate and efficient protein synthesis under certain stress conditions. May act as a fidelity factor of the translation reaction, by catalyzing a one-codon backward translocation of tRNAs on improperly translocated ribosomes. Back-translocation proceeds from a post-translocation (POST) complex to a pre-translocation (PRE) complex, thus giving elongation factor G a second chance to translocate the tRNAs correctly. Binds to ribosomes in a GTP-dependent manner. The protein is Elongation factor 4 of Rickettsia bellii (strain OSU 85-389).